A 593-amino-acid chain; its full sequence is Aspartate--tRNA ligase (593 aa).

An L-aspartate-binding site is contributed by Glu180. Positions Gln204–Lys207 are aspartate. Arg226 serves as a coordination point for L-aspartate. ATP contacts are provided by residues Arg226–Glu228 and Gln235. His453 lines the L-aspartate pocket. An ATP-binding site is contributed by Glu487. Arg494 contacts L-aspartate. An ATP-binding site is contributed by Gly539–Arg542.

The protein belongs to the class-II aminoacyl-tRNA synthetase family. Type 1 subfamily. As to quaternary structure, homodimer.

Its subcellular location is the cytoplasm. It carries out the reaction tRNA(Asp) + L-aspartate + ATP = L-aspartyl-tRNA(Asp) + AMP + diphosphate. Its function is as follows. Catalyzes the attachment of L-aspartate to tRNA(Asp) in a two-step reaction: L-aspartate is first activated by ATP to form Asp-AMP and then transferred to the acceptor end of tRNA(Asp). This Clostridium botulinum (strain Okra / Type B1) protein is Aspartate--tRNA ligase.